We begin with the raw amino-acid sequence, 549 residues long: Chaperonin GroEL (549 aa).

ATP-binding positions include 30-33 (TLGP), lysine 51, 87-91 (DGTTT), glycine 415, 479-481 (NAA), and aspartate 495.

The protein belongs to the chaperonin (HSP60) family. As to quaternary structure, forms a cylinder of 14 subunits composed of two heptameric rings stacked back-to-back. Interacts with the co-chaperonin GroES.

It localises to the cytoplasm. It carries out the reaction ATP + H2O + a folded polypeptide = ADP + phosphate + an unfolded polypeptide.. Its function is as follows. Together with its co-chaperonin GroES, plays an essential role in assisting protein folding. The GroEL-GroES system forms a nano-cage that allows encapsulation of the non-native substrate proteins and provides a physical environment optimized to promote and accelerate protein folding. This is Chaperonin GroEL from Stenotrophomonas maltophilia (strain R551-3).